We begin with the raw amino-acid sequence, 541 residues long: Serine/threonine-protein kinase akt-1 (541 aa).

The PH domain occupies 15–118 (DVVIEGWLHK…WIHAIESISK (104 aa)). The Protein kinase domain maps to 193-450 (FDFLKVLGKG…ALEICRADFF (258 aa)). Residues 199 to 207 (LGKGTFGKV) and Lys-222 each bind ATP. The active-site Proton acceptor is Asp-316. Phosphothreonine is present on Thr-350. The 78-residue stretch at 451–528 (RTVDWEATYR…HNVMGSINRI (78 aa)) folds into the AGC-kinase C-terminal domain. Residue Ser-517 is modified to Phosphoserine.

The protein belongs to the protein kinase superfamily. AGC Ser/Thr protein kinase family. RAC subfamily. Interacts with pdk-1, sgk-1, akt-2 and daf-16. Part of a complex containing sgk-1, akt-1 and akt-2. Interacts with cmd-1 in the presence of Ca(2+). Interacts with let-92 phosphatase regulatory subunit pptr-1. It depends on Mg(2+) as a cofactor. In terms of tissue distribution, expressed in neurons, muscle cells of the pharynx, rectal gland cells, vulva and spermatheca.

It catalyses the reaction L-seryl-[protein] + ATP = O-phospho-L-seryl-[protein] + ADP + H(+). The catalysed reaction is L-threonyl-[protein] + ATP = O-phospho-L-threonyl-[protein] + ADP + H(+). Phosphorylated and activated by pdk-1. Its function is as follows. Acts downstream of PI3 kinase age-1 and kinase pdk-1 in the daf-2/insulin receptor-like transduction pathway. Phosphorylates Forkhead-related daf-16 and the longevity-promoting skn-1 transcription factors, which inhibits their entry into the nucleus and antagonizes their functions. Plays a role in maintaining the gonadal basement membrane through it's role in inhibiting daf-16 activity. Has an essential role in regulating developmental arrest at the dauer stage. Plays a role in immune function and pathogen resistance. Regulates salt chemotaxis learning. Downstream of age-1 and together with akt-2 and sgk-1, promotes cell survival during embryonic development. The sequence is that of Serine/threonine-protein kinase akt-1 from Caenorhabditis elegans.